The primary structure comprises 658 residues: Glycogen debranching enzyme (658 aa).

Residue Asp-336 is the Nucleophile of the active site. Glu-371 serves as the catalytic Proton donor. Residues 459 to 484 (EANGEENRDGTNSNYSDNHGKEGLGG) form a disordered region.

Belongs to the glycosyl hydrolase 13 family.

It catalyses the reaction Hydrolysis of (1-&gt;6)-alpha-D-glucosidic linkages to branches with degrees of polymerization of three or four glucose residues in limit dextrin.. The protein operates within glycan degradation; glycogen degradation. In terms of biological role, removes maltotriose and maltotetraose chains that are attached by 1,6-alpha-linkage to the limit dextrin main chain, generating a debranched limit dextrin. The sequence is that of Glycogen debranching enzyme from Salmonella dublin (strain CT_02021853).